Consider the following 450-residue polypeptide: Glutamate--tRNA ligase 1 (450 aa).

A 'HIGH' region motif is present at residues 7 to 17 (PSPTGYMHVGN). A 'KMSKS' region motif is present at residues 236–240 (KISKR). Lys239 is a binding site for ATP.

This sequence belongs to the class-I aminoacyl-tRNA synthetase family. Glutamate--tRNA ligase type 1 subfamily. Monomer.

The protein resides in the cytoplasm. It catalyses the reaction tRNA(Glu) + L-glutamate + ATP = L-glutamyl-tRNA(Glu) + AMP + diphosphate. Catalyzes the attachment of glutamate to tRNA(Glu) in a two-step reaction: glutamate is first activated by ATP to form Glu-AMP and then transferred to the acceptor end of tRNA(Glu). This Anaplasma phagocytophilum (strain HZ) protein is Glutamate--tRNA ligase 1.